We begin with the raw amino-acid sequence, 241 residues long: GTP cyclohydrolase 1 (241 aa).

Residues 1 to 11 (MEKPRGVRCTN) constitute a propeptide that is removed on maturation. The segment at 1-58 (MEKPRGVRCTNGFPERELPRPGASRPAEKSRPPEAKGAQPADAWKAGRPRSEEDNELN) is disordered. Residues Ser-51 and Ser-72 each carry the phosphoserine modification. Zn(2+) contacts are provided by Cys-132, His-135, and Cys-203.

Belongs to the GTP cyclohydrolase I family. In terms of assembly, toroid-shaped homodecamer, composed of two pentamers of five dimers. Interacts with AHSA1 and GCHFR/GFRP. In terms of processing, phosphorylated.

The protein resides in the cytoplasm. The protein localises to the nucleus. It catalyses the reaction GTP + H2O = 7,8-dihydroneopterin 3'-triphosphate + formate + H(+). The protein operates within cofactor biosynthesis; 7,8-dihydroneopterin triphosphate biosynthesis; 7,8-dihydroneopterin triphosphate from GTP: step 1/1. With respect to regulation, GTP shows a positive allosteric effect, and tetrahydrobiopterin inhibits the enzyme activity. Zinc is required for catalytic activity. Inhibited by Mg(2+). May positively regulate nitric oxide synthesis in endothelial cells. May be involved in dopamine synthesis. May modify pain sensitivity and persistence. In Rattus norvegicus (Rat), this protein is GTP cyclohydrolase 1 (Gch1).